We begin with the raw amino-acid sequence, 95 residues long: Large ribosomal subunit protein bL25 (95 aa).

Belongs to the bacterial ribosomal protein bL25 family. As to quaternary structure, part of the 50S ribosomal subunit; part of the 5S rRNA/L5/L18/L25 subcomplex. Contacts the 5S rRNA. Binds to the 5S rRNA independently of L5 and L18.

In terms of biological role, this is one of the proteins that binds to the 5S RNA in the ribosome where it forms part of the central protuberance. This is Large ribosomal subunit protein bL25 from Haemophilus ducreyi (strain 35000HP / ATCC 700724).